A 72-amino-acid chain; its full sequence is Translational regulator CsrA (72 aa).

The protein belongs to the CsrA/RsmA family. In terms of assembly, homodimer; the beta-strands of each monomer intercalate to form a hydrophobic core, while the alpha-helices form wings that extend away from the core.

The protein resides in the cytoplasm. A translational regulator that binds mRNA to regulate translation initiation and/or mRNA stability. Usually binds in the 5'-UTR at or near the Shine-Dalgarno sequence preventing ribosome-binding, thus repressing translation. Its main target seems to be the major flagellin gene, while its function is anatagonized by FliW. This chain is Translational regulator CsrA, found in Clostridium botulinum (strain Loch Maree / Type A3).